An 827-amino-acid polypeptide reads, in one-letter code: SID1 transmembrane family member 1 (827 aa).

The signal sequence occupies residues 1–19 (MLDCLRLALLCALPWLLRA). Residues 20–309 (AVPGHQEEPL…SIKESVYVKS (290 aa)) are Extracellular-facing. Residues asparagine 67, asparagine 83, asparagine 136, and asparagine 282 are each glycosylated (N-linked (GlcNAc...) asparagine). Residues 310–330 (SLFSIFVFLSFYLGCLLVVLV) form a helical membrane-spanning segment. The Cytoplasmic portion of the chain corresponds to 331–442 (HHVRFQRKSI…DRRIVSKKYK (112 aa)). The segment at 344 to 409 (FGSSDGSGNM…VEESDFDTMP (66 aa)) is disordered. Low complexity predominate over residues 375-386 (SSSSPGRQMSSS). Positions 398–409 (SSVEESDFDTMP) are enriched in acidic residues. Residues 443-463 (IYFWNIITIAVFYALPVMQLV) traverse the membrane as a helical segment. Topologically, residues 464–494 (ITYQTVVNVTGNQDICYYNFLCAHPLGVLSA) are extracellular. Asparagine 471 carries N-linked (GlcNAc...) asparagine glycosylation. Residues 495 to 515 (FNNILSNLGHVLLGFLFLLIV) traverse the membrane as a helical segment. Over 516–541 (LRRDLLHRRALEAKDIFAMEYGIPKH) the chain is Cytoplasmic. The chain crosses the membrane as a helical span at residues 542 to 562 (FGLFYAMGIALMMEGVLSACY). Topologically, residues 563–572 (HVCPNYSNFQ) are extracellular. N-linked (GlcNAc...) asparagine glycosylation occurs at asparagine 567. A helical membrane pass occupies residues 573–590 (FDTSFMYMIAGLCMLKLY). At 591–600 (QTRHPDINAS) the chain is on the cytoplasmic side. A helical transmembrane segment spans residues 601–621 (AYSAYASFAVVITLTVLGVVF). The Extracellular segment spans residues 622 to 626 (GKNDV). Residues 627-647 (WFWIIFSAIHILSSLALSTQI) form a helical membrane-spanning segment. Over 648–683 (YYMGRFKIDLGIFRRAAMVFYTDCIQQCSRPLYMDR) the chain is Cytoplasmic. A helical transmembrane segment spans residues 684–704 (MVLLIVGNLVNWSFAFFGLIY). Over 705–710 (RPRDFA) the chain is Extracellular. A helical transmembrane segment spans residues 711–731 (SYMLGIFICNLLLYLAFYIIM). Residues 732-741 (KLRSSEKVLP) are Cytoplasmic-facing. Residues 742 to 762 (LPVFCIAATAVVWAAALYFFF) form a helical membrane-spanning segment. The Extracellular portion of the chain corresponds to 763–791 (QNLSSWEGTPAESREKNRECVLLDFFDDH). Residue asparagine 764 is glycosylated (N-linked (GlcNAc...) asparagine). The helical transmembrane segment at 792 to 812 (DIWHFLSATALFFSFLVLLTL) threads the bilayer. Over 813 to 827 (DDDLDVVRRDQIPVF) the chain is Cytoplasmic.

Belongs to the SID1 family.

Its subcellular location is the membrane. In terms of biological role, in vitro binds long double-stranded RNA (dsRNA) (500 and 700 base pairs), but not dsRNA shorter than 300 bp. Not involved in RNA autophagy, a process in which RNA is directly imported into lysosomes in an ATP-dependent manner, and degraded. This Mus musculus (Mouse) protein is SID1 transmembrane family member 1 (Sidt1).